The primary structure comprises 332 residues: D-galactose/methyl-galactoside binding periplasmic protein MglB (332 aa).

The signal sequence occupies residues 1–23 (MNKKVLTLSAVMASLLFGAHAHA). Beta-D-galactose is bound by residues Asp-37 and Asn-114. Positions 37 and 114 each coordinate beta-D-glucose. Asp-157, Asn-159, Asp-161, Lys-163, and Gln-165 together coordinate Ca(2+). His-175, Asp-177, and Arg-181 together coordinate beta-D-galactose. Beta-D-glucose is bound by residues His-175, Asp-177, and Arg-181. A Ca(2+)-binding site is contributed by Glu-228. Beta-D-galactose contacts are provided by Asn-234, Asp-259, and Asn-279. Positions 234, 259, and 279 each coordinate beta-D-glucose.

This sequence belongs to the bacterial solute-binding protein 2 family. In terms of assembly, the ABC transporter complex is composed of one ATP-binding protein (MglA), two transmembrane proteins (MglC) and a solute-binding protein (MglB).

It localises to the periplasm. Functionally, part of the ABC transporter complex MglABC involved in galactose/methyl galactoside import. In addition, binds D-galactose and D-glucose and plays a role in the chemotaxis towards these two sugars by interacting with the Trg chemoreceptor. The sequence is that of D-galactose/methyl-galactoside binding periplasmic protein MglB (mglB) from Salmonella typhimurium (strain LT2 / SGSC1412 / ATCC 700720).